A 582-amino-acid chain; its full sequence is Semenogelin-2 (582 aa).

The first 23 residues, 1–23 (MKSIILFVLSLLLILEKQAAVMG), serve as a signal peptide directing secretion. Disordered regions lie at residues 25-65 (KGGS…SSSI), 91-157 (HKTT…GISS), 171-192 (LSKE…GSQS), 272-366 (NLNQ…KDIQ), and 393-557 (SNQD…HNTV). The segment covering 50–59 (GQKDKQHTES) has biased composition (basic and acidic residues). The span at 111-134 (QKGRDHVKPKRHFRLIVIHRKGGQ) shows a compositional bias: basic residues. 2 stretches are compositionally biased toward polar residues: residues 137–157 (HGTQ…GISS) and 174–192 (EQAS…GSQS). A compositionally biased stretch (basic and acidic residues) spans 293–310 (TEERQFNHGEKSVQKDVP). The span at 325–335 (KSQNQVSIPSQ) shows a compositional bias: polar residues. Composition is skewed to basic and acidic residues over residues 336–345 (DQEHGHKENK), 353–366 (TEER…KDIQ), 396–405 (DQEHGHKENK), and 413–426 (TEER…KDIQ). Polar residues-rich tracts occupy residues 427-437 (KSVSKGSISIQ) and 445-455 (KSQNQVTIPSQ). Over residues 456–465 (DQEHGHKENK) the composition is skewed to basic and acidic residues. 2 stretches are compositionally biased toward polar residues: residues 487–498 (KDVSQSSLSFQT) and 506–529 (SQIQ…NSGK). The span at 530–546 (SADREQDLLSHEQESRY) shows a compositional bias: basic and acidic residues. A compositionally biased stretch (polar residues) spans 547–557 (QQKSSGAHNTV).

Belongs to the semenogelin family. Interacts with SERPINA5.

It is found in the secreted. Functionally, participates in the formation of a gel matrix (sperm coagulum) entrapping the accessory gland secretions and ejaculated spermatozoa. The sequence is that of Semenogelin-2 (SEMG2) from Colobus guereza (Mantled guereza).